The sequence spans 140 residues: Coiled-coil domain-containing protein 126 (140 aa).

Residues Met-1–Gln-35 form the signal peptide. A glycan (N-linked (GlcNAc...) asparagine) is linked at Asn-110. Over residues Asn-118–Asn-130 the composition is skewed to low complexity. Residues Asn-118–Arg-140 are disordered. Positions Lys-131–Arg-140 are enriched in polar residues.

It localises to the secreted. The protein is Coiled-coil domain-containing protein 126 (Ccdc126) of Mus musculus (Mouse).